A 232-amino-acid polypeptide reads, in one-letter code: dTTP/UTP pyrophosphatase (232 aa).

Asp-103 acts as the Proton acceptor in catalysis.

Belongs to the Maf family. YhdE subfamily. The cofactor is a divalent metal cation.

The protein localises to the cytoplasm. The enzyme catalyses dTTP + H2O = dTMP + diphosphate + H(+). It carries out the reaction UTP + H2O = UMP + diphosphate + H(+). Functionally, nucleoside triphosphate pyrophosphatase that hydrolyzes dTTP and UTP. May have a dual role in cell division arrest and in preventing the incorporation of modified nucleotides into cellular nucleic acids. In Bartonella henselae (strain ATCC 49882 / DSM 28221 / CCUG 30454 / Houston 1) (Rochalimaea henselae), this protein is dTTP/UTP pyrophosphatase.